The following is a 270-amino-acid chain: NAD(P)H-hydrate epimerase (270 aa).

The YjeF N-terminal domain maps to 25 to 234 (FQQLMDLMQN…DLLAPEAIYQ (210 aa)). Position 73-77 (73-77 (DNGGQ)) interacts with (6S)-NADPHX. K(+) contacts are provided by Asn74 and Asp144. Residues 148-154 (GVGLYGH) and Glu177 each bind (6S)-NADPHX. A K(+)-binding site is contributed by Thr180.

Belongs to the NnrE/AIBP family. It depends on K(+) as a cofactor.

It catalyses the reaction (6R)-NADHX = (6S)-NADHX. The catalysed reaction is (6R)-NADPHX = (6S)-NADPHX. Catalyzes the epimerization of the S- and R-forms of NAD(P)HX, a damaged form of NAD(P)H that is a result of enzymatic or heat-dependent hydration. This is a prerequisite for the S-specific NAD(P)H-hydrate dehydratase to allow the repair of both epimers of NAD(P)HX. In Legionella pneumophila serogroup 1 (strain 2300/99 Alcoy), this protein is NAD(P)H-hydrate epimerase.